The following is an 874-amino-acid chain: Alanine--tRNA ligase (874 aa).

Residues H564, H568, C665, and H669 each contribute to the Zn(2+) site.

Belongs to the class-II aminoacyl-tRNA synthetase family. The cofactor is Zn(2+).

Its subcellular location is the cytoplasm. The enzyme catalyses tRNA(Ala) + L-alanine + ATP = L-alanyl-tRNA(Ala) + AMP + diphosphate. In terms of biological role, catalyzes the attachment of alanine to tRNA(Ala) in a two-step reaction: alanine is first activated by ATP to form Ala-AMP and then transferred to the acceptor end of tRNA(Ala). Also edits incorrectly charged Ser-tRNA(Ala) and Gly-tRNA(Ala) via its editing domain. The protein is Alanine--tRNA ligase of Cupriavidus necator (strain ATCC 17699 / DSM 428 / KCTC 22496 / NCIMB 10442 / H16 / Stanier 337) (Ralstonia eutropha).